Reading from the N-terminus, the 1138-residue chain is 2'-5'-oligoadenylate synthase 3 (1138 aa).

Methionine 1 is subject to N-acetylmethionine. Positions 6 to 341 are OAS domain 1; that stretch reads TPAGALDKLV…GVLVQPWEGP (336 aa). 2 interaction with dsRNA regions span residues 12–56 and 185–199; these read DKLV…VIRI and EPRK…AKLK. Residues 342-462 form a linker region; the sequence is GLPRAGILDL…GSRMSPDLSQ (121 aa). Residues 370–379 show a composition bias toward basic and acidic residues; sequence LAVQSKERSQ. Disordered stretches follow at residues 370–403 and 434–459; these read LAVQ…NPSA and TQST…MSPD. Over residues 447 to 459 the composition is skewed to polar residues; the sequence is SSISTAGSRMSPD. OAS domain regions lie at residues 463–793 and 801–1135; these read IPSK…PWDV and TLAE…WPVK. An ATP-binding site is contributed by serine 855. Mg(2+) is bound by residues aspartate 867, aspartate 869, and aspartate 939. Arginine 998, lysine 1001, and glutamine 1020 together coordinate ATP.

The protein belongs to the 2-5A synthase family. As to quaternary structure, monomer. It depends on Mg(2+) as a cofactor. Intestine.

The protein resides in the cytoplasm. Its subcellular location is the nucleus. The enzyme catalyses 3 ATP = 5'-triphosphoadenylyl-(2'-&gt;5')-adenylyl-(2'-&gt;5')-adenosine + 2 diphosphate. Produced as a latent enzyme which is activated by dsRNA generated during the course of viral infection. Strongly activated by long dsRNAs at least 50 nucleotides in length. ssRNA does not activate the enzyme. Functionally, interferon-induced, dsRNA-activated antiviral enzyme which plays a critical role in cellular innate antiviral response. In addition, it may also play a role in other cellular processes such as apoptosis, cell growth, differentiation and gene regulation. Synthesizes preferentially dimers of 2'-5'-oligoadenylates (2-5A) from ATP which then bind to the inactive monomeric form of ribonuclease L (RNase L) leading to its dimerization and subsequent activation. Activation of RNase L leads to degradation of cellular as well as viral RNA, resulting in the inhibition of protein synthesis, thus terminating viral replication. Can mediate the antiviral effect via the classical RNase L-dependent pathway or an alternative antiviral pathway independent of RNase L. The chain is 2'-5'-oligoadenylate synthase 3 (Oas3) from Mus musculus (Mouse).